Reading from the N-terminus, the 211-residue chain is Octanoyltransferase (211 aa).

The BPL/LPL catalytic domain occupies 32–207; the sequence is PCTYDEIWFV…ELSKFLEIFI (176 aa). Substrate-binding positions include 71–78, 138–140, and 151–153; these read RGGQITYH, SLG, and GLA. The active-site Acyl-thioester intermediate is cysteine 169.

It belongs to the LipB family.

It localises to the cytoplasm. The catalysed reaction is octanoyl-[ACP] + L-lysyl-[protein] = N(6)-octanoyl-L-lysyl-[protein] + holo-[ACP] + H(+). It functions in the pathway protein modification; protein lipoylation via endogenous pathway; protein N(6)-(lipoyl)lysine from octanoyl-[acyl-carrier-protein]: step 1/2. In terms of biological role, catalyzes the transfer of endogenously produced octanoic acid from octanoyl-acyl-carrier-protein onto the lipoyl domains of lipoate-dependent enzymes. Lipoyl-ACP can also act as a substrate although octanoyl-ACP is likely to be the physiological substrate. The sequence is that of Octanoyltransferase from Buchnera aphidicola subsp. Acyrthosiphon pisum (strain APS) (Acyrthosiphon pisum symbiotic bacterium).